We begin with the raw amino-acid sequence, 711 residues long: Ribosomal RNA large subunit methyltransferase K/L (711 aa).

Positions 43–154 constitute a THUMP domain; it reads LAYRITLWTR…NGVITIAMNF (112 aa).

It belongs to the methyltransferase superfamily. RlmKL family.

The protein localises to the cytoplasm. It carries out the reaction guanosine(2445) in 23S rRNA + S-adenosyl-L-methionine = N(2)-methylguanosine(2445) in 23S rRNA + S-adenosyl-L-homocysteine + H(+). It catalyses the reaction guanosine(2069) in 23S rRNA + S-adenosyl-L-methionine = N(2)-methylguanosine(2069) in 23S rRNA + S-adenosyl-L-homocysteine + H(+). Its function is as follows. Specifically methylates the guanine in position 2445 (m2G2445) and the guanine in position 2069 (m7G2069) of 23S rRNA. This is Ribosomal RNA large subunit methyltransferase K/L from Shewanella oneidensis (strain ATCC 700550 / JCM 31522 / CIP 106686 / LMG 19005 / NCIMB 14063 / MR-1).